A 399-amino-acid chain; its full sequence is Acetylornithine aminotransferase (399 aa).

Residues 99–100 (GA) and Phe132 contribute to the pyridoxal 5'-phosphate site. Arg135 serves as a coordination point for N(2)-acetyl-L-ornithine. 217–220 (DEVQ) is a pyridoxal 5'-phosphate binding site. Lys246 bears the N6-(pyridoxal phosphate)lysine mark. A N(2)-acetyl-L-ornithine-binding site is contributed by Thr274. Position 275 (Thr275) interacts with pyridoxal 5'-phosphate.

The protein belongs to the class-III pyridoxal-phosphate-dependent aminotransferase family. ArgD subfamily. Homodimer. It depends on pyridoxal 5'-phosphate as a cofactor.

The protein localises to the cytoplasm. The catalysed reaction is N(2)-acetyl-L-ornithine + 2-oxoglutarate = N-acetyl-L-glutamate 5-semialdehyde + L-glutamate. It functions in the pathway amino-acid biosynthesis; L-arginine biosynthesis; N(2)-acetyl-L-ornithine from L-glutamate: step 4/4. This Agrobacterium fabrum (strain C58 / ATCC 33970) (Agrobacterium tumefaciens (strain C58)) protein is Acetylornithine aminotransferase.